Consider the following 287-residue polypeptide: N-acetylmannosamine kinase (287 aa).

Residues 5–12 (AIDIGGTK) and 131–138 (GVGGGIII) each bind ATP. Zn(2+) contacts are provided by H155, C165, C167, and C172.

The protein belongs to the ROK (NagC/XylR) family. NanK subfamily. In terms of assembly, homodimer.

The catalysed reaction is an N-acyl-D-mannosamine + ATP = an N-acyl-D-mannosamine 6-phosphate + ADP + H(+). It participates in amino-sugar metabolism; N-acetylneuraminate degradation; D-fructose 6-phosphate from N-acetylneuraminate: step 2/5. Its function is as follows. Catalyzes the phosphorylation of N-acetylmannosamine (ManNAc) to ManNAc-6-P. The polypeptide is N-acetylmannosamine kinase (Vibrio cholerae serotype O1 (strain ATCC 39541 / Classical Ogawa 395 / O395)).